Reading from the N-terminus, the 310-residue chain is D-alanyl-D-alanine endopeptidase (310 aa).

The first 23 residues, 1 to 23 (MRNRLLSLVTLFLSLSVATAVSA), serve as a signal peptide directing secretion. Residue Ser66 is the Acyl-ester intermediate of the active site. Lys69 acts as the Proton acceptor in catalysis. Residue Ser123 is part of the active site. Lys230 lines the substrate pocket.

It belongs to the peptidase S11 family.

The protein resides in the periplasm. Cell wall formation. This is D-alanyl-D-alanine endopeptidase (pbpG) from Pseudomonas aeruginosa (strain ATCC 15692 / DSM 22644 / CIP 104116 / JCM 14847 / LMG 12228 / 1C / PRS 101 / PAO1).